The following is a 756-amino-acid chain: 5-methyltetrahydropteroyltriglutamate--homocysteine methyltransferase (756 aa).

5-methyltetrahydropteroyltri-L-glutamate-binding positions include 16-19 (RELK) and lysine 116. Residues 433 to 435 (IGS) and glutamate 486 each bind L-homocysteine. L-methionine contacts are provided by residues 433 to 435 (IGS) and glutamate 486. Residues 517–518 (RC) and tryptophan 563 contribute to the 5-methyltetrahydropteroyltri-L-glutamate site. Aspartate 601 is an L-homocysteine binding site. Aspartate 601 lines the L-methionine pocket. Glutamate 607 serves as a coordination point for 5-methyltetrahydropteroyltri-L-glutamate. The Zn(2+) site is built by histidine 643, cysteine 645, and glutamate 667. Histidine 696 serves as the catalytic Proton donor. Zn(2+) is bound at residue cysteine 728.

The protein belongs to the vitamin-B12 independent methionine synthase family. It depends on Zn(2+) as a cofactor.

It catalyses the reaction 5-methyltetrahydropteroyltri-L-glutamate + L-homocysteine = tetrahydropteroyltri-L-glutamate + L-methionine. The protein operates within amino-acid biosynthesis; L-methionine biosynthesis via de novo pathway; L-methionine from L-homocysteine (MetE route): step 1/1. In terms of biological role, catalyzes the transfer of a methyl group from 5-methyltetrahydrofolate to homocysteine resulting in methionine formation. This Buchnera aphidicola subsp. Baizongia pistaciae (strain Bp) protein is 5-methyltetrahydropteroyltriglutamate--homocysteine methyltransferase.